Here is a 331-residue protein sequence, read N- to C-terminus: Phosphoribosylformylglycinamidine cyclo-ligase (331 aa).

It belongs to the AIR synthase family.

It localises to the cytoplasm. The enzyme catalyses 2-formamido-N(1)-(5-O-phospho-beta-D-ribosyl)acetamidine + ATP = 5-amino-1-(5-phospho-beta-D-ribosyl)imidazole + ADP + phosphate + H(+). Its pathway is purine metabolism; IMP biosynthesis via de novo pathway; 5-amino-1-(5-phospho-D-ribosyl)imidazole from N(2)-formyl-N(1)-(5-phospho-D-ribosyl)glycinamide: step 2/2. The sequence is that of Phosphoribosylformylglycinamidine cyclo-ligase from Clostridium kluyveri (strain NBRC 12016).